Consider the following 222-residue polypeptide: MNTYFIAGTDTDAGKTVAACAFVQYLVKQSQQVAVMKPVASGCHWQNGQLVNEDALNLMRQSNTSFDYDRVNPYTFEAAIAPHIAAADSGVVIDKERLLKAVDWFHERPIDSLVIEGAGGWQLPLASGLRMPQVVKEVNAKVVLVVGLKLGCLNHALLSLQSIKQEGCDVAGWIAVQTGPEPMPRQAENLASLRELLDEKELASIPYLPGWTEEDLSIYFHK.

12-17 serves as a coordination point for ATP; that stretch reads DAGKTV. Thr-16 contributes to the Mg(2+) binding site. Lys-37 is an active-site residue. A substrate-binding site is contributed by Ser-41. Residues Asp-54, 116-119, 176-177, 206-208, and Glu-213 contribute to the ATP site; these read EGAG, VQ, and PYL. Mg(2+) is bound by residues Asp-54 and Glu-116.

Belongs to the dethiobiotin synthetase family. In terms of assembly, homodimer. Requires Mg(2+) as cofactor.

It localises to the cytoplasm. It carries out the reaction (7R,8S)-7,8-diammoniononanoate + CO2 + ATP = (4R,5S)-dethiobiotin + ADP + phosphate + 3 H(+). It participates in cofactor biosynthesis; biotin biosynthesis; biotin from 7,8-diaminononanoate: step 1/2. Functionally, catalyzes a mechanistically unusual reaction, the ATP-dependent insertion of CO2 between the N7 and N8 nitrogen atoms of 7,8-diaminopelargonic acid (DAPA, also called 7,8-diammoniononanoate) to form a ureido ring. This chain is ATP-dependent dethiobiotin synthetase BioD, found in Idiomarina loihiensis (strain ATCC BAA-735 / DSM 15497 / L2-TR).